The following is a 283-amino-acid chain: Cytosolic Fe-S cluster assembly factor CFD1 (283 aa).

ATP is bound at residue 26-33 (GKGGVGKS). Residues C202 and C205 each coordinate [4Fe-4S] cluster.

It belongs to the Mrp/NBP35 ATP-binding proteins family. NUBP2/CFD1 subfamily. As to quaternary structure, heterotetramer of 2 NBP35 and 2 CFD1 chains. Requires [4Fe-4S] cluster as cofactor.

The protein resides in the cytoplasm. Component of the cytosolic iron-sulfur (Fe/S) protein assembly (CIA) machinery. Required for maturation of extramitochondrial Fe-S proteins. The NBP35-CFD1 heterotetramer forms a Fe-S scaffold complex, mediating the de novo assembly of an Fe-S cluster and its transfer to target apoproteins. Required for biogenesis and export of both ribosomal subunits, which may reflect a role in assembly of the Fe/S clusters in RLI1, a protein which performs rRNA processing and ribosome export. The sequence is that of Cytosolic Fe-S cluster assembly factor CFD1 from Kluyveromyces lactis (strain ATCC 8585 / CBS 2359 / DSM 70799 / NBRC 1267 / NRRL Y-1140 / WM37) (Yeast).